The following is a 398-amino-acid chain: Na(+)/H(+) antiporter NhaA (398 aa).

12 helical membrane-spanning segments follow: residues 8–28, 59–79, 96–116, 124–144, 154–174, 177–197, 202–222, 223–243, 261–281, 292–312, 328–348, and 362–382; these read FLQL…LALI, LLLW…GMEI, LPVI…SFII, AGWA…LSLL, VFLL…IALF, AELH…LLML, VMLL…VLKS, GVHA…IRGA, YFIL…GLSW, IIVG…WLAV, LFGL…IGGL, and LGIL…LRNA.

This sequence belongs to the NhaA Na(+)/H(+) (TC 2.A.33) antiporter family.

The protein resides in the cell inner membrane. It catalyses the reaction Na(+)(in) + 2 H(+)(out) = Na(+)(out) + 2 H(+)(in). Functionally, na(+)/H(+) antiporter that extrudes sodium in exchange for external protons. This Tolumonas auensis (strain DSM 9187 / NBRC 110442 / TA 4) protein is Na(+)/H(+) antiporter NhaA.